A 247-amino-acid polypeptide reads, in one-letter code: Trypsin (247 aa).

The signal sequence occupies residues 1 to 21 (LTTVISYFALVAFALVGVSYA). Residues 22–30 (TPKASINGR) constitute a propeptide, activation peptide. Residues 31–247 (IVGGEMTDIS…QSNFPGVYGI (217 aa)) form the Peptidase S1 domain. A disulfide bond links cysteine 61 and cysteine 77. Active-site charge relay system residues include histidine 76 and aspartate 120. 2 disulfides stabilise this stretch: cysteine 185–cysteine 201 and cysteine 212–cysteine 236. The active-site Charge relay system is serine 216.

The protein belongs to the peptidase S1 family. As to expression, midgut.

Its subcellular location is the secreted. The protein localises to the extracellular space. The catalysed reaction is Preferential cleavage: Arg-|-Xaa, Lys-|-Xaa.. This chain is Trypsin, found in Simulium vittatum (Striped black fly).